The chain runs to 307 residues: Protoheme IX farnesyltransferase (307 aa).

The next 8 membrane-spanning stretches (helical) occupy residues 32 to 52 (MGIV…ALHF), 65 to 85 (FFTI…NNYI), 108 to 128 (PGFA…FLLL), 131 to 151 (PMAV…YTLW), 158 to 178 (LNTV…WAAI), 186 to 206 (IAWM…LALA), 251 to 271 (LGIT…ALGL), and 287 to 307 (FVYS…VTFF).

It belongs to the UbiA prenyltransferase family. Protoheme IX farnesyltransferase subfamily. Interacts with CtaA.

It is found in the cell membrane. The enzyme catalyses heme b + (2E,6E)-farnesyl diphosphate + H2O = Fe(II)-heme o + diphosphate. The protein operates within porphyrin-containing compound metabolism; heme O biosynthesis; heme O from protoheme: step 1/1. Its function is as follows. Converts heme B (protoheme IX) to heme O by substitution of the vinyl group on carbon 2 of heme B porphyrin ring with a hydroxyethyl farnesyl side group. In Bacillus mycoides (strain KBAB4) (Bacillus weihenstephanensis), this protein is Protoheme IX farnesyltransferase.